The following is a 741-amino-acid chain: Chromosome transmission fidelity protein 18 (741 aa).

183 to 190 is a binding site for ATP; the sequence is GPPGIGKT.

This sequence belongs to the activator 1 small subunits family. CTF18 subfamily. Component of the CTF18-RFC complex, which consists of CTF18, CTF8, DCC1, RFC2, RFC3, RFC4 and RFC5. CTF18 interacts with ECO1.

The protein resides in the nucleus. In terms of biological role, essential for the fidelity of chromosome transmission. Required for the DNA replication block checkpoint. Component of the RFC-like complex CTF18-RFC which is required for efficient establishment of chromosome cohesion during S-phase and may load or unload POL30/PCNA. During a clamp loading circle, the RFC:clamp complex binds to DNA and the recognition of the double-stranded/single-stranded junction stimulates ATP hydrolysis by RFC. The complex presumably provides bipartite ATP sites in which one subunit supplies a catalytic site for hydrolysis of ATP bound to the neighboring subunit. Dissociation of RFC from the clamp leaves the clamp encircling DNA. The sequence is that of Chromosome transmission fidelity protein 18 (CTF18) from Saccharomyces cerevisiae (strain ATCC 204508 / S288c) (Baker's yeast).